The sequence spans 512 residues: Secreted triacylglycerol lipase LIP5 (512 aa).

Positions 1–17 are cleaved as a signal peptide; it reads MMYASLVHWLALAVALA. Residues Cys-118 and Cys-292 are joined by a disulfide bond. The Nucleophile role is filled by Ser-203. An N-linked (GlcNAc...) asparagine glycan is attached at Asn-316. The active site involves Asp-352. N-linked (GlcNAc...) asparagine glycosylation occurs at Asn-361. His-386 is an active-site residue. The N-linked (GlcNAc...) asparagine glycan is linked to Asn-453. The tract at residues 480–512 is disordered; that stretch reads KGDISPGEGGDHTKESKKAAAKFKAEKKHGKHH. The span at 488–497 shows a compositional bias: basic and acidic residues; that stretch reads GGDHTKESKK. Over residues 498–512 the composition is skewed to basic residues; it reads AAAKFKAEKKHGKHH.

Belongs to the AB hydrolase superfamily. Lipase family. Class Lip subfamily.

The protein resides in the secreted. It carries out the reaction a triacylglycerol + H2O = a diacylglycerol + a fatty acid + H(+). The catalysed reaction is a monoacylglycerol + H2O = glycerol + a fatty acid + H(+). The enzyme catalyses a diacylglycerol + H2O = a monoacylglycerol + a fatty acid + H(+). Secreted lipase that hydrolyzes acylglycerol lipids such as triacylglycerols and consequently releases free fatty acid. Can hydrolyze 4-nitrophenyl palmitate to release 4-nitrophenol and palmitoic acid. Due to an absence of fatty acid synthase genes in Malassezia species, secretory lipases are essential for the yeast to generate free fatty acids from degradation of sebum and assimilate them as lipid sources for growth. Plays an essential role at the pathogen-host interface during disease progression. This is Secreted triacylglycerol lipase LIP5 from Malassezia restricta (strain ATCC 96810 / NBRC 103918 / CBS 7877) (Seborrheic dermatitis infection agent).